The primary structure comprises 134 residues: Putative pre-16S rRNA nuclease (134 aa).

It belongs to the YqgF nuclease family.

Its subcellular location is the cytoplasm. Its function is as follows. Could be a nuclease involved in processing of the 5'-end of pre-16S rRNA. The chain is Putative pre-16S rRNA nuclease from Helicobacter pylori (strain Shi470).